The primary structure comprises 177 residues: Large ribosomal subunit protein uL6 (177 aa).

Belongs to the universal ribosomal protein uL6 family. Part of the 50S ribosomal subunit.

Functionally, this protein binds to the 23S rRNA, and is important in its secondary structure. It is located near the subunit interface in the base of the L7/L12 stalk, and near the tRNA binding site of the peptidyltransferase center. This Yersinia pseudotuberculosis serotype O:1b (strain IP 31758) protein is Large ribosomal subunit protein uL6.